The chain runs to 256 residues: uncharacterized protein (256 aa).

6 consecutive transmembrane segments (helical) span residues 6–26, 29–49, 61–81, 145–165, 175–195, and 218–238; these read TSFI…VSFL, LALV…GTFI, ISGT…GLYF, IIGC…TGIA, YYFK…IWLI, and IGWL…AIQF.

This sequence belongs to the DedA family.

The protein localises to the cell membrane. This is an uncharacterized protein from Buchnera aphidicola subsp. Acyrthosiphon pisum (strain APS) (Acyrthosiphon pisum symbiotic bacterium).